The sequence spans 251 residues: Probable transcriptional regulatory protein cu0933 (251 aa).

The interval 56–79 is disordered; the sequence is AKKSSVPNDNIERARKRGSGEEAG.

This sequence belongs to the TACO1 family.

It localises to the cytoplasm. The sequence is that of Probable transcriptional regulatory protein cu0933 from Corynebacterium urealyticum (strain ATCC 43042 / DSM 7109).